A 415-amino-acid polypeptide reads, in one-letter code: Fructose-1,6-bisphosphatase, chloroplastic (415 aa).

A chloroplast-targeting transit peptide spans 1–57 (MASIGPATTTAVKLRSSIFNPQSSTLSPSQQCITFTKSLHSFPTATRHNVASGVRCM). Mg(2+) is bound by residues Glu-135, Glu-164, Asp-185, Leu-187, and Asp-188. 188 to 191 (DGSS) lines the substrate pocket. An involved in light regulation region spans residues 207 to 232 (SPNDECIVDSDHDDESQLSAEEQRCV). Residues Cys-231 and Cys-236 are joined by a disulfide bond. Asn-295, Tyr-327, Tyr-345, Tyr-347, and Lys-357 together coordinate substrate. Residue Glu-363 participates in Mg(2+) binding.

It belongs to the FBPase class 1 family. Homotetramer. The cofactor is Mg(2+).

It localises to the plastid. The protein localises to the chloroplast. The enzyme catalyses beta-D-fructose 1,6-bisphosphate + H2O = beta-D-fructose 6-phosphate + phosphate. It participates in carbohydrate biosynthesis; Calvin cycle. The polypeptide is Fructose-1,6-bisphosphatase, chloroplastic (Spinacia oleracea (Spinach)).